The following is a 143-amino-acid chain: Large ribosomal subunit protein uL11 (143 aa).

Belongs to the universal ribosomal protein uL11 family. In terms of assembly, part of the ribosomal stalk of the 50S ribosomal subunit. Interacts with L10 and the large rRNA to form the base of the stalk. L10 forms an elongated spine to which L12 dimers bind in a sequential fashion forming a multimeric L10(L12)X complex. Post-translationally, one or more lysine residues are methylated.

Forms part of the ribosomal stalk which helps the ribosome interact with GTP-bound translation factors. This chain is Large ribosomal subunit protein uL11, found in Pseudomonas paraeruginosa (strain DSM 24068 / PA7) (Pseudomonas aeruginosa (strain PA7)).